Reading from the N-terminus, the 236-residue chain is Ascorbate-specific transmembrane electron transporter 2 (236 aa).

Topologically, residues 1–13 (MGLGLGVRAAPFT) are cytoplasmic. A helical membrane pass occupies residues 14–34 (YAAHALAVAAAAMVLVWAIYF). The Cytochrome b561 domain occupies 15 to 219 (AAHALAVAAA…FGASVVVAAI (205 aa)). Residues 35–50 (RGGLAIEATNKNLIFN) lie on the Extracellular side of the membrane. A helical transmembrane segment spans residues 51 to 71 (VHPVLMLIGYIIIGGEAIMVY). His-52 is a heme b binding site. 67–75 (AIMVYRVLP) contributes to the L-ascorbate binding site. Topologically, residues 72–84 (RVLPTSNHETNKL) are cytoplasmic. A helical transmembrane segment spans residues 85 to 105 (IHLVLHGIALVLGAVGIYFAF). The heme b site is built by His-86 and His-120. Over 106-122 (KNHNESGIANLYSLHSW) the chain is Extracellular. Residue 116–125 (LYSLHSWIGI) participates in monodehydro-L-ascorbate radical binding. Residues 123–143 (IGIGTITLYGIQWIVGFVTFF) form a helical membrane-spanning segment. The Cytoplasmic segment spans residues 144–153 (FPGAAPNVKK). The helical transmembrane segment at 154–174 (GVLPWHILFGLFVYILALANA) threads the bilayer. Residue His-159 participates in heme b binding. The Extracellular segment spans residues 175–201 (ELGFLEKLTFLESSGLDKYGTEAFLVN). Residues 202 to 222 (FTALVVVLFGASVVVAAIAPV) traverse the membrane as a helical segment. Residues 223–236 (RLEEPQGYVPIPEN) are Cytoplasmic-facing.

It depends on heme b as a cofactor.

It is found in the membrane. Functionally, two-heme-containing cytochrome. Catalyzes ascorbate-dependent trans-membrane electron transfer by utilizing a concerted H(+)/e(-) transfer mechanism. The polypeptide is Ascorbate-specific transmembrane electron transporter 2 (Zea mays (Maize)).